A 296-amino-acid chain; its full sequence is Fructose-bisphosphate aldolase class 1 (296 aa).

The active-site Proton acceptor is E175. K212 (schiff-base intermediate with dihydroxyacetone-P) is an active-site residue.

Belongs to the class I fructose-bisphosphate aldolase family.

It carries out the reaction beta-D-fructose 1,6-bisphosphate = D-glyceraldehyde 3-phosphate + dihydroxyacetone phosphate. Its pathway is carbohydrate degradation; glycolysis; D-glyceraldehyde 3-phosphate and glycerone phosphate from D-glucose: step 4/4. The chain is Fructose-bisphosphate aldolase class 1 from Staphylococcus haemolyticus (strain JCSC1435).